Here is a 409-residue protein sequence, read N- to C-terminus: Glycosyltransferase GtfE (409 aa).

Belongs to the glycosyltransferase 28 family.

The protein operates within antibiotic biosynthesis; vancomycin biosynthesis. Its function is as follows. D-glucosyltransferase that acts on the aglycone core, transferring D-glucose to the phenolic hydroxyl of OH-Phegly(4) to form a devancoaminyl-vancomycin (DVV) intermediate in the biosynthesis of glycopeptide antibiotic vancomycin. Also able to glycosylate A47934, an antibiotic with a teicoplanin-like heptapeptide, but lacking sugar residues. This is Glycosyltransferase GtfE (gtfE) from Amycolatopsis orientalis (Nocardia orientalis).